The following is a 446-amino-acid chain: Tol-Pal system protein TolB (446 aa).

The signal sequence occupies residues 1–43; the sequence is MRKLWAPNWLSRRQNANPTRDQSRHALMAWLAAALMSAGAAHA.

It belongs to the TolB family. As to quaternary structure, the Tol-Pal system is composed of five core proteins: the inner membrane proteins TolA, TolQ and TolR, the periplasmic protein TolB and the outer membrane protein Pal. They form a network linking the inner and outer membranes and the peptidoglycan layer.

Its subcellular location is the periplasm. In terms of biological role, part of the Tol-Pal system, which plays a role in outer membrane invagination during cell division and is important for maintaining outer membrane integrity. This Cupriavidus metallidurans (strain ATCC 43123 / DSM 2839 / NBRC 102507 / CH34) (Ralstonia metallidurans) protein is Tol-Pal system protein TolB.